The sequence spans 211 residues: Pyridoxine/pyridoxamine 5'-phosphate oxidase (211 aa).

Residues 7-10 (RRDY) and Lys65 contribute to the substrate site. FMN-binding positions include 60–65 (RIVLLK), 75–76 (YT), Arg81, Lys82, and Gln104. Residues Tyr122, Arg126, and Ser130 each coordinate substrate. FMN contacts are provided by residues 139-140 (QS) and Trp184. 190–192 (RLH) is a binding site for substrate. Arg194 is an FMN binding site.

The protein belongs to the pyridoxamine 5'-phosphate oxidase family. Homodimer. FMN is required as a cofactor.

It catalyses the reaction pyridoxamine 5'-phosphate + O2 + H2O = pyridoxal 5'-phosphate + H2O2 + NH4(+). The enzyme catalyses pyridoxine 5'-phosphate + O2 = pyridoxal 5'-phosphate + H2O2. It participates in cofactor metabolism; pyridoxal 5'-phosphate salvage; pyridoxal 5'-phosphate from pyridoxamine 5'-phosphate: step 1/1. Its pathway is cofactor metabolism; pyridoxal 5'-phosphate salvage; pyridoxal 5'-phosphate from pyridoxine 5'-phosphate: step 1/1. Catalyzes the oxidation of either pyridoxine 5'-phosphate (PNP) or pyridoxamine 5'-phosphate (PMP) into pyridoxal 5'-phosphate (PLP). In Aliivibrio fischeri (strain ATCC 700601 / ES114) (Vibrio fischeri), this protein is Pyridoxine/pyridoxamine 5'-phosphate oxidase.